We begin with the raw amino-acid sequence, 361 residues long: tRNA-specific 2-thiouridylase MnmA (361 aa).

Residues 11–18 (GMSGGVDS) and M37 each bind ATP. Residues 97 to 99 (NPD) form an interaction with target base in tRNA region. Residue C102 is the Nucleophile of the active site. C102 and C199 form a disulfide bridge. Residue G126 coordinates ATP. Residues 149-151 (KDQ) form an interaction with tRNA region. Residue C199 is the Cysteine persulfide intermediate of the active site. The tract at residues 311–312 (RY) is interaction with tRNA.

Belongs to the MnmA/TRMU family.

It localises to the cytoplasm. It catalyses the reaction S-sulfanyl-L-cysteinyl-[protein] + uridine(34) in tRNA + AH2 + ATP = 2-thiouridine(34) in tRNA + L-cysteinyl-[protein] + A + AMP + diphosphate + H(+). Its function is as follows. Catalyzes the 2-thiolation of uridine at the wobble position (U34) of tRNA, leading to the formation of s(2)U34. The polypeptide is tRNA-specific 2-thiouridylase MnmA (Cupriavidus necator (strain ATCC 17699 / DSM 428 / KCTC 22496 / NCIMB 10442 / H16 / Stanier 337) (Ralstonia eutropha)).